The primary structure comprises 73 residues: uncharacterized protein (73 aa).

2 helical membrane passes run 7–27 (LFSS…IPNL) and 47–67 (YFGY…IIIL).

Its subcellular location is the cell membrane. This is an uncharacterized protein from Methanocaldococcus jannaschii (strain ATCC 43067 / DSM 2661 / JAL-1 / JCM 10045 / NBRC 100440) (Methanococcus jannaschii).